A 770-amino-acid polypeptide reads, in one-letter code: Signal transducer and activator of transcription 3 (770 aa).

Ala-2 carries the post-translational modification N-acetylalanine. An N6-acetyllysine mark is found at Lys-49 and Lys-87. An Essential for nuclear import motif is present at residues 150-162; the sequence is DVRKRVQDLEQKM. In terms of domain architecture, SH2 spans 580 to 670; it reads WNEGYIMGFI…DATNILVSPL (91 aa). Residues Lys-601, Lys-615, and Lys-631 each carry the allysine; alternate modification. Lys-601, Lys-615, and Lys-631 each carry N6-acetyllysine; alternate. Tyr-640 is modified (phosphotyrosine; by TYK2). At Lys-685 the chain carries Allysine; alternate. The residue at position 685 (Lys-685) is an N6-acetyllysine; alternate. At Tyr-705 the chain carries Phosphotyrosine; by FER and PTK6. At Lys-707 the chain carries N6-acetyllysine. The residue at position 714 (Thr-714) is a Phosphothreonine. Ser-727 carries the phosphoserine; by DYRK2, NLK, NEK6, IRAK1, RPS6KA5, ZIPK/DAPK3 and PKC/PRKCE modification.

It belongs to the transcription factor STAT family. Forms a homodimer or a heterodimer with a related family member (at least STAT1). Component of a promoter-binding complex composed of STAT3, NFATC3 and NFATC4; complex formation is enhanced by calcineurin. Interacts with IL31RA, NCOA1, PELP1, SIPAR, SOCS7, STATIP1 and TMF1. Interacts with IL23R in presence of IL23. Interacts (via SH2 domain) with NLK. Interacts with ARL2BP; the interaction is enhanced by LIF and JAK1 expression. Interacts with KPNA4 and KPNA5; KPNA4 may be the primary mediator of nuclear import. Interacts with CAV2; the interaction is increased on insulin-induced tyrosine phosphorylation of CAV2 and leads to STAT3 activation. Interacts with ARL2BP; interaction is enhanced with ARL2. Interacts with NEK6. Binds to CDK9 when activated and nuclear. Interacts with BMX. Interacts with ZIPK/DAPK3. Interacts with PIAS3; the interaction occurs on stimulation by IL6, CNTF or OSM and inhibits the DNA binding activity of STAT3. In prostate cancer cells, interacts with PRKCE and promotes DNA binding activity of STAT3. Interacts with STMN3, antagonizing its microtubule-destabilizing activity. Interacts with the 'Lys-129' acetylated form of BIRC5/survivin. Interacts with FER. Interacts (via SH2 domain) with EIF2AK2/PKR (via the kinase catalytic domain). Interacts with FGFR4. Interacts with INPP5F; the interaction is independent of STAT3 Tyr-705 phosphorylation status. Interacts with OCIAD1 and OCIAD2. Interacts (unphosphorylated or phosphorylated at Ser-727) with PHB1. Interacts and may form heterodimers with NHLH1. Found in a complex with SLC39A6, SLC39A10 and with the 'Ser-727' phosphorylated form of STAT3 throughout mitosis. Interacts (when acetylated) with EP300 (via bromo domain); interaction takes place following STAT3 acetylation by EP300 and promotes enhanceosome assembly. Interacts (when acetylated) with BRD2 (via bromo domain); interaction promotes STAT3 recruitment to chromatin and T-helper Th17 cell differentiation. Interacts with FAM220A/SIPAR; the interaction occurs in both the nucleus and the cytoplasm, is enhanced by IL6 and promotes STAT3 dephosphorylation. Interacts in both unphosphorylated and phosphorylated forms with FAM220A but interacts preferentially in the phosphorylated form in the nucleus. Interacts with PTPN2; the interaction is promoted by FAM220A and leads to STAT3 dephosphorylation which negatively regulates STAT3 transcriptional activator activity. In terms of processing, activated through tyrosine phosphorylation by BMX. Tyrosine phosphorylated in response to IL-6, IL-11, CNTF, LIF, CSF-1, EGF, PDGF, IFN-alpha and OSM. Tyrosine phosphorylated in response to constitutively activated FGFR1, FGFR2, FGFR3 and FGFR4. Phosphorylated on serine upon DNA damage, probably by ATM or ATR. Serine phosphorylation is important for the formation of stable DNA-binding STAT3 homodimers and maximal transcriptional activity. ARL2BP may participate in keeping the phosphorylated state of STAT3 within the nucleus. Tyrosine phosphorylated upon stimulation with EGF. Upon LPS challenge, phosphorylated within the nucleus by IRAK1. Phosphorylated on Ser-727 by RPS6KA5. Dephosphorylation on tyrosine residues by PTPN2 negatively regulates IL6/interleukin-6 signaling. Phosphorylation at Tyr-705 by FER, isoform M2 of PKM (PKM2) or PTK6 leads to an increase of its transcriptional activity. Phosphorylation at Tyr-705 is increased in the presence of calcineurin. Phosphorylation at Tyr-640 by TYK2 negatively regulates transcriptional activity. Acetylated on lysine residues by EP300/p300, promoting its activation. Acetylation at Lys-49 and Lys-87 by EP300/p300 promotes its activation. Acetylation at Lys-87 by EP300/p300 promotes its association with BRD2 and recruitment to chromatin. Deacetylated at Lys-49 and Lys-87 by HDAC1. Acetylation at Lys-685 by EP300/p300 promotes its homodimerization and activation. Deacetylated at Lys-685 by HDAC3. Acetylated on lysine residues by CREBBP. Deacetylation by LOXL3 leads to disrupt STAT3 dimerization and inhibit STAT3 transcription activity. Oxidation of lysine residues to allysine on STAT3 preferentially takes place on lysine residues that are acetylated. Post-translationally, some lysine residues are oxidized to allysine by LOXL3, leading to disrupt STAT3 dimerization and inhibit STAT3 transcription activity. Oxidation of lysine residues to allysine on STAT3 preferentially takes place on lysine residues that are acetylated.

Its subcellular location is the cytoplasm. The protein resides in the nucleus. In terms of biological role, signal transducer and transcription activator that mediates cellular responses to interleukins, KITLG/SCF, LEP and other growth factors. Once activated, recruits coactivators, such as NCOA1 or MED1, to the promoter region of the target gene. May mediate cellular responses to activated FGFR1, FGFR2, FGFR3 and FGFR4. Upon activation of IL6ST/gp130 signaling by interleukin-6 (IL6), binds to the IL6-responsive elements identified in the promoters of various acute-phase protein genes. Activated by IL31 through IL31RA. Acts as a regulator of inflammatory response by regulating differentiation of naive CD4(+) T-cells into T-helper Th17 or regulatory T-cells (Treg): acetylation promotes its transcription activity and cell differentiation while deacetylation and oxidation of lysine residues by LOXL3 inhibits differentiation. Involved in cell cycle regulation by inducing the expression of key genes for the progression from G1 to S phase, such as CCND1. Mediates the effects of LEP on melanocortin production, body energy homeostasis and lactation. May play an apoptotic role by transctivating BIRC5 expression under LEP activation. Cytoplasmic STAT3 represses macroautophagy by inhibiting EIF2AK2/PKR activity. Plays a crucial role in basal beta cell functions, such as regulation of insulin secretion. Following JAK/STAT signaling activation and as part of a complex with NFATC3 and NFATC4, binds to the alpha-beta E4 promoter region of CRYAB and activates transcription in cardiomyocytes. Plays an important role in host defense in methicillin-resistant S.aureus lung infection by regulating the expression of the antimicrobial lectin REG3G. In Bos taurus (Bovine), this protein is Signal transducer and activator of transcription 3 (STAT3).